A 331-amino-acid polypeptide reads, in one-letter code: Probable inactive O-methyltransferase 11 (331 aa).

S-adenosyl-L-methionine is bound by residues Gly-179, Asp-202, 224-226 (GDF), Asp-225, Phe-226, and Lys-239.

Belongs to the class I-like SAM-binding methyltransferase superfamily. Cation-independent O-methyltransferase family. COMT subfamily.

The protein is Probable inactive O-methyltransferase 11 (omt11) of Dictyostelium discoideum (Social amoeba).